The primary structure comprises 378 residues: Ubiquitin-conjugating enzyme E2 Q2 (378 aa).

The interval 126 to 152 (DQPLPTGQNGTTEEVTSEEEEEEEMAE) is disordered. Residues 140-152 (VTSEEEEEEEMAE) show a composition bias toward acidic residues. A UBC core domain is found at 207–371 (QASDRLMKEL…VQIHEKNGWY (165 aa)). The active-site Glycyl thioester intermediate is Cys-307.

This sequence belongs to the ubiquitin-conjugating enzyme family. Post-translationally, auto-ubiquitinated in vitro.

It localises to the cytoplasm. It catalyses the reaction S-ubiquitinyl-[E1 ubiquitin-activating enzyme]-L-cysteine + [E2 ubiquitin-conjugating enzyme]-L-cysteine = [E1 ubiquitin-activating enzyme]-L-cysteine + S-ubiquitinyl-[E2 ubiquitin-conjugating enzyme]-L-cysteine.. The protein operates within protein modification; protein ubiquitination. Functionally, accepts ubiquitin from the E1 complex and catalyzes its covalent attachment to other proteins. In vitro catalyzes 'Lys-48'-linked polyubiquitination. This Mus musculus (Mouse) protein is Ubiquitin-conjugating enzyme E2 Q2 (Ube2q2).